A 462-amino-acid chain; its full sequence is Glutamate--tRNA ligase 2 (462 aa).

The 'HIGH' region signature appears at 8-18 (PSPTGLLHVGG). Residues 227 to 231 (PLSKR) carry the 'KMSKS' region motif. Lysine 230 is an ATP binding site.

It belongs to the class-I aminoacyl-tRNA synthetase family. Glutamate--tRNA ligase type 1 subfamily. In terms of assembly, monomer.

The protein localises to the cytoplasm. The catalysed reaction is tRNA(Glu) + L-glutamate + ATP = L-glutamyl-tRNA(Glu) + AMP + diphosphate. In terms of biological role, catalyzes the attachment of glutamate to tRNA(Glu) in a two-step reaction: glutamate is first activated by ATP to form Glu-AMP and then transferred to the acceptor end of tRNA(Glu). This chain is Glutamate--tRNA ligase 2, found in Thermosipho melanesiensis (strain DSM 12029 / CIP 104789 / BI429).